Reading from the N-terminus, the 456-residue chain is Arginine biosynthesis bifunctional protein ArgJ, mitochondrial (456 aa).

Positions 184, 213, 224, 311, 451, and 456 each coordinate substrate. The active-site Nucleophile is Thr-224.

Belongs to the ArgJ family. In terms of assembly, heterodimer of an alpha and a beta chain. Post-translationally, the alpha and beta chains are autoproteolytically processed from a single precursor protein within the mitochondrion.

The protein localises to the mitochondrion matrix. The enzyme catalyses N(2)-acetyl-L-ornithine + L-glutamate = N-acetyl-L-glutamate + L-ornithine. It catalyses the reaction L-glutamate + acetyl-CoA = N-acetyl-L-glutamate + CoA + H(+). Its pathway is amino-acid biosynthesis; L-arginine biosynthesis; L-ornithine and N-acetyl-L-glutamate from L-glutamate and N(2)-acetyl-L-ornithine (cyclic): step 1/1. It participates in amino-acid biosynthesis; L-arginine biosynthesis; N(2)-acetyl-L-ornithine from L-glutamate: step 1/4. In terms of biological role, catalyzes two activities which are involved in the cyclic version of arginine biosynthesis: the synthesis of acetylglutamate from glutamate and acetyl-CoA, and of ornithine by transacetylation between acetylornithine and glutamate. This Neosartorya fischeri (strain ATCC 1020 / DSM 3700 / CBS 544.65 / FGSC A1164 / JCM 1740 / NRRL 181 / WB 181) (Aspergillus fischerianus) protein is Arginine biosynthesis bifunctional protein ArgJ, mitochondrial.